The chain runs to 156 residues: MPRRRVAAKREVLDDPKYGSQILAKFMNHVMESGKKAVAERIVYGALEKVKERKNSDPLEIFEKALDAIAPLVEVKSRRVGGATYQVPVEVRPSRRNALAMRWLVDFARKRGEKSMALRLAGELLDAAEGKGAAVKKREDVHRMAEANKAFSHYRF.

The protein belongs to the universal ribosomal protein uS7 family. In terms of assembly, part of the 30S ribosomal subunit. Contacts proteins S9 and S11.

In terms of biological role, one of the primary rRNA binding proteins, it binds directly to 16S rRNA where it nucleates assembly of the head domain of the 30S subunit. Is located at the subunit interface close to the decoding center, probably blocks exit of the E-site tRNA. In Pseudomonas fluorescens (strain SBW25), this protein is Small ribosomal subunit protein uS7.